Here is a 617-residue protein sequence, read N- to C-terminus: Dihydroxy-acid dehydratase (617 aa).

Position 81 (aspartate 81) interacts with Mg(2+). Cysteine 122 contacts [2Fe-2S] cluster. Residues aspartate 123 and lysine 124 each contribute to the Mg(2+) site. At lysine 124 the chain carries N6-carboxylysine. Cysteine 195 provides a ligand contact to [2Fe-2S] cluster. Glutamate 492 is a Mg(2+) binding site. The active-site Proton acceptor is the serine 518.

It belongs to the IlvD/Edd family. As to quaternary structure, homodimer. The cofactor is [2Fe-2S] cluster. Mg(2+) serves as cofactor.

The catalysed reaction is (2R)-2,3-dihydroxy-3-methylbutanoate = 3-methyl-2-oxobutanoate + H2O. It catalyses the reaction (2R,3R)-2,3-dihydroxy-3-methylpentanoate = (S)-3-methyl-2-oxopentanoate + H2O. Its pathway is amino-acid biosynthesis; L-isoleucine biosynthesis; L-isoleucine from 2-oxobutanoate: step 3/4. The protein operates within amino-acid biosynthesis; L-valine biosynthesis; L-valine from pyruvate: step 3/4. Functions in the biosynthesis of branched-chain amino acids. Catalyzes the dehydration of (2R,3R)-2,3-dihydroxy-3-methylpentanoate (2,3-dihydroxy-3-methylvalerate) into 2-oxo-3-methylpentanoate (2-oxo-3-methylvalerate) and of (2R)-2,3-dihydroxy-3-methylbutanoate (2,3-dihydroxyisovalerate) into 2-oxo-3-methylbutanoate (2-oxoisovalerate), the penultimate precursor to L-isoleucine and L-valine, respectively. The chain is Dihydroxy-acid dehydratase from Azorhizobium caulinodans (strain ATCC 43989 / DSM 5975 / JCM 20966 / LMG 6465 / NBRC 14845 / NCIMB 13405 / ORS 571).